The primary structure comprises 786 residues: Endonuclease MutS2 (786 aa).

Position 333 to 340 (333 to 340) interacts with ATP; sequence GPNTGGKT. Residues 711-786 form the Smr domain; it reads LDLRGERYDQ…GSGATIVNFK (76 aa).

The protein belongs to the DNA mismatch repair MutS family. MutS2 subfamily. In terms of assembly, homodimer. Binds to stalled ribosomes, contacting rRNA.

Endonuclease that is involved in the suppression of homologous recombination and thus may have a key role in the control of bacterial genetic diversity. In terms of biological role, acts as a ribosome collision sensor, splitting the ribosome into its 2 subunits. Detects stalled/collided 70S ribosomes which it binds and splits by an ATP-hydrolysis driven conformational change. Acts upstream of the ribosome quality control system (RQC), a ribosome-associated complex that mediates the extraction of incompletely synthesized nascent chains from stalled ribosomes and their subsequent degradation. Probably generates substrates for RQC. The protein is Endonuclease MutS2 of Lacticaseibacillus paracasei (strain ATCC 334 / BCRC 17002 / CCUG 31169 / CIP 107868 / KCTC 3260 / NRRL B-441) (Lactobacillus paracasei).